The primary structure comprises 532 residues: Muscarinic acetylcholine receptor M5 (532 aa).

At 1 to 29 the chain is on the extracellular side; it reads MEGESYHNETTVNGTPVNHQALERHGLWE. N-linked (GlcNAc...) asparagine glycosylation is present at asparagine 8. The chain crosses the membrane as a helical span at residues 30–53; it reads VITIAAVTAVVSLMTIVGNVLVMI. Residues 54-66 are Cytoplasmic-facing; the sequence is SFKVNSQLKTVNN. The helical transmembrane segment at 67 to 87 threads the bilayer; it reads YYLLSLACADLIIGIFSMNLY. Residues 88–104 lie on the Extracellular side of the membrane; the sequence is TTYILMGRWVLGSLACD. An intrachain disulfide couples cysteine 103 to cysteine 183. A helical transmembrane segment spans residues 105-126; sequence LWLALDYVASNASVMNLLVISF. Residues 127 to 146 lie on the Cytoplasmic side of the membrane; sequence DRYFSITRPLTYRAKRTPKR. A helical transmembrane segment spans residues 147 to 169; it reads AGIMIGLAWLVSFILWAPAILCW. The Extracellular portion of the chain corresponds to 170 to 191; the sequence is QYLVGKRTVPPDECQIQFLSEP. A helical transmembrane segment spans residues 192–214; the sequence is TITFGTAIAAFYIPVSVMTILYC. Topologically, residues 215–443 are cytoplasmic; that stretch reads RIYRETEKRT…LVKERKAAQT (229 aa). The interval 265 to 290 is disordered; sequence VRNQASWSSSRRSTSTTGKPTQATDL. A compositionally biased stretch (low complexity) spans 270-281; that stretch reads SWSSSRRSTSTT. Residues 444–464 form a helical membrane-spanning segment; it reads LSAILLAFIITWTPYNIMVLV. Topologically, residues 465 to 478 are extracellular; that stretch reads STFCDKCVPVTLWH. The chain crosses the membrane as a helical span at residues 479 to 498; that stretch reads LGYWLCYVNSTINPICYALC. At 499–532 the chain is on the cytoplasmic side; it reads NRTFRKTFKLLLLCRWKKKKVEEKLYWQGNSKLP. A phosphothreonine mark is found at threonine 501 and threonine 505.

The protein belongs to the G-protein coupled receptor 1 family. Muscarinic acetylcholine receptor subfamily. CHRM5 sub-subfamily.

It is found in the cell membrane. The protein localises to the postsynaptic cell membrane. Functionally, the muscarinic acetylcholine receptor mediates various cellular responses, including inhibition of adenylate cyclase, breakdown of phosphoinositides and modulation of potassium channels through the action of G proteins. Primary transducing effect is Pi turnover. In Mus musculus (Mouse), this protein is Muscarinic acetylcholine receptor M5 (Chrm5).